The sequence spans 614 residues: Zinc finger and SCAN domain-containing protein 2 (614 aa).

Disordered stretches follow at residues 1 to 25, 42 to 73, and 162 to 200; these read MAAE…EDEQ, AVLQ…EGPQ, and NISG…RVVP. One can recognise an SCAN box domain in the interval 69-127; that stretch reads AEGPQGALVRFRELCRRWLRPEVHTKEQMLTVLPREIQAWLQEHRPESSEEAVALVEDL. 14 consecutive C2H2-type zinc fingers follow at residues 222–244, 250–272, 278–300, 306–328, 334–356, 362–384, 390–412, 418–440, 446–468, 474–496, 502–524, 530–552, 558–580, and 586–608; these read YECP…ERTH, YKCD…QTTH, YKCR…QRIH, FQCA…QRTH, YSCP…QGIH, YACK…QRIH, YKCT…RRTH, YQCG…RRTH, YKCG…QGTH, YECL…QRTH, YRCG…QRTH, YKCL…QRAH, YRCP…QRIH, and YRCP…QRTH.

Belongs to the krueppel C2H2-type zinc-finger protein family. In the adult, predominantly found in spermatids. Also present in the embryo.

The protein localises to the nucleus. Its function is as follows. May be involved in transcriptional regulation during the post-meiotic stages of spermatogenesis. The polypeptide is Zinc finger and SCAN domain-containing protein 2 (Zscan2) (Mus musculus (Mouse)).